Consider the following 132-residue polypeptide: Protamine (132 aa).

2 disordered regions span residues 17-46 (GGKK…RGGR) and 96-115 (SMLK…RRRR). 2 stretches are compositionally biased toward basic residues: residues 18 to 46 (GKKR…RGGR) and 98 to 115 (LKKR…RRRR).

It belongs to the UPF0771 family. Testis.

The protein resides in the nucleus. Its subcellular location is the chromosome. Functionally, protamines substitute for histones in the chromatin of sperm during the haploid phase of spermatogenesis. They compact sperm DNA into a highly condensed, stable and inactive complex. This is Protamine from Anthonomus grandis (Mexican cotton boll weevil).